Consider the following 210-residue polypeptide: MADS-box protein AGL42 (210 aa).

Residues 1–61 (MVRGKIEMKK…GRLYEFSSSD (61 aa)) form the MADS-box domain. One can recognise a K-box domain in the interval 87 to 177 (LQQLKQEASH…HQKNVINPWR (91 aa)).

Expressed in quiescent center (QC) cells of root tips. Expressed at the base of the petiole of cotyledons and leaves, in flower buds, petals, sepals and abscission zone of flowers and siliques.

It is found in the nucleus. Its function is as follows. MADS-box transcription factor that acts with AGL71 and AGL72 in the control of flowering time. Promotes flowering at the shoot apical and axillary meristems. Seems to act through a gibberellin-dependent pathway. Interacts genetically with SOC1 and its expression is directly regulated by SOC1. Plays a role in controlling flower organ senescence and abscission by repressing ethylene responses and regulating the expression of BOP2 and IDA. The sequence is that of MADS-box protein AGL42 (AGL42) from Arabidopsis thaliana (Mouse-ear cress).